The sequence spans 224 residues: Small ribosomal subunit protein uS3 (224 aa).

One can recognise a KH type-2 domain in the interval 39–107; sequence IREFLKKKPS…DVWVEIAEVK (69 aa).

The protein belongs to the universal ribosomal protein uS3 family. Part of the 30S ribosomal subunit. Forms a tight complex with proteins S10 and S14.

Binds the lower part of the 30S subunit head. Binds mRNA in the 70S ribosome, positioning it for translation. In Chlamydia muridarum (strain MoPn / Nigg), this protein is Small ribosomal subunit protein uS3.